We begin with the raw amino-acid sequence, 272 residues long: Short-chain dehydrogenase/reductase iacC (272 aa).

NADP(+) is bound by residues Ile-13, Asp-59, and Asn-88. Active-site proton donor residues include Ser-150 and Tyr-169. Positions 169, 173, and 202 each coordinate NADP(+). Catalysis depends on Lys-173, which acts as the Lowers pKa of active site Tyr.

This sequence belongs to the short-chain dehydrogenases/reductases (SDR) family.

It functions in the pathway secondary metabolite biosynthesis. In terms of biological role, short-chain dehydrogenase/reductase; part of the gene cluster that mediates the biosynthesis of iso-A82775C, a enylepoxycyclohexane and biosynthetic precursor of the chloropestolide anticancer natural products. Within the cluster, the prenyltransferase iacE prenylates siccayne to generate pestalodiol E, using dimethylallyl diphosphate (DMAPP) as cosubstrate. The probable oxidoreductase iacF is then involved in the epoxidation of pestalodiol F to pestalodiol F, which is further converted to pestalofone A by the short-chain dehydrogenase/reductase iacG. Iso-A82775C is subsequently generated from pestalofone A by the short-chain dehydrogenase/reductase iacC. Iso-A82775C is further condensed with maldoxin via a Diels-Alder reaction to produce the anticancer natural products chloropestolides A to E. This is Short-chain dehydrogenase/reductase iacC from Pestalotiopsis fici (strain W106-1 / CGMCC3.15140).